The following is a 361-amino-acid chain: 3-dehydroquinate synthase (361 aa).

Residues 71-76, 105-109, 129-130, lysine 142, and lysine 151 contribute to the NAD(+) site; these read DGEQYK, GVIGD, and TT. Residues glutamate 184, histidine 247, and histidine 264 each contribute to the Zn(2+) site.

It belongs to the sugar phosphate cyclases superfamily. Dehydroquinate synthase family. It depends on Co(2+) as a cofactor. Zn(2+) serves as cofactor. Requires NAD(+) as cofactor.

Its subcellular location is the cytoplasm. It catalyses the reaction 7-phospho-2-dehydro-3-deoxy-D-arabino-heptonate = 3-dehydroquinate + phosphate. The protein operates within metabolic intermediate biosynthesis; chorismate biosynthesis; chorismate from D-erythrose 4-phosphate and phosphoenolpyruvate: step 2/7. Its function is as follows. Catalyzes the conversion of 3-deoxy-D-arabino-heptulosonate 7-phosphate (DAHP) to dehydroquinate (DHQ). The chain is 3-dehydroquinate synthase from Pectobacterium atrosepticum (strain SCRI 1043 / ATCC BAA-672) (Erwinia carotovora subsp. atroseptica).